The chain runs to 606 residues: Aspartate--tRNA(Asp/Asn) ligase (606 aa).

Glu196 contributes to the L-aspartate binding site. The interval 220–223 (QIFK) is aspartate. An L-aspartate-binding site is contributed by Arg242. ATP contacts are provided by residues 242–244 (RDE) and Gln251. His465 serves as a coordination point for L-aspartate. Glu499 serves as a coordination point for ATP. Arg506 is a binding site for L-aspartate. Position 551 to 554 (551 to 554 (GMDR)) interacts with ATP.

It belongs to the class-II aminoacyl-tRNA synthetase family. Type 1 subfamily. In terms of assembly, homodimer.

Its subcellular location is the cytoplasm. The catalysed reaction is tRNA(Asx) + L-aspartate + ATP = L-aspartyl-tRNA(Asx) + AMP + diphosphate. Aspartyl-tRNA synthetase with relaxed tRNA specificity since it is able to aspartylate not only its cognate tRNA(Asp) but also tRNA(Asn). Reaction proceeds in two steps: L-aspartate is first activated by ATP to form Asp-AMP and then transferred to the acceptor end of tRNA(Asp/Asn). In Oleidesulfovibrio alaskensis (strain ATCC BAA-1058 / DSM 17464 / G20) (Desulfovibrio alaskensis), this protein is Aspartate--tRNA(Asp/Asn) ligase.